Here is a 1087-residue protein sequence, read N- to C-terminus: 2'-5'-oligoadenylate synthase 3 (1087 aa).

Met1 carries the post-translational modification N-acetylmethionine. Residues 6-343 (TPAAALDRFV…GDPVQSWKGP (338 aa)) form an OAS domain 1 region. Interaction with dsRNA regions lie at residues 12-57 (DRFV…VLKT) and 186-200 (ELRR…AKLK). The linker stretch occupies residues 344 to 410 (GLPRAGCSGL…VPGMALDLSQ (67 aa)). Thr365 bears the Phosphothreonine mark. OAS domain stretches follow at residues 411-742 (IPTK…PWDV) and 750-1084 (TPAG…WPVK). Ser804 is a binding site for ATP. 3 residues coordinate Mg(2+): Asp816, Asp818, and Asp888. ATP contacts are provided by Arg947, Lys950, and Gln969.

The protein belongs to the 2-5A synthase family. Monomer. The cofactor is Mg(2+). In terms of tissue distribution, present at high level in placenta trophoblast.

The protein resides in the cytoplasm. Its subcellular location is the nucleus. It catalyses the reaction 3 ATP = 5'-triphosphoadenylyl-(2'-&gt;5')-adenylyl-(2'-&gt;5')-adenosine + 2 diphosphate. With respect to regulation, produced as a latent enzyme which is activated by dsRNA generated during the course of viral infection. Strongly activated by long dsRNAs at least 50 nucleotides in length. ssRNA does not activate the enzyme. Interferon-induced, dsRNA-activated antiviral enzyme which plays a critical role in cellular innate antiviral response. In addition, it may also play a role in other cellular processes such as apoptosis, cell growth, differentiation and gene regulation. Synthesizes preferentially dimers of 2'-5'-oligoadenylates (2-5A) from ATP which then bind to the inactive monomeric form of ribonuclease L (RNase L) leading to its dimerization and subsequent activation. Activation of RNase L leads to degradation of cellular as well as viral RNA, resulting in the inhibition of protein synthesis, thus terminating viral replication. Can mediate the antiviral effect via the classical RNase L-dependent pathway or an alternative antiviral pathway independent of RNase L. Displays antiviral activity against Chikungunya virus (CHIKV), Dengue virus, Sindbis virus (SINV) and Semliki forest virus (SFV). This is 2'-5'-oligoadenylate synthase 3 (OAS3) from Homo sapiens (Human).